The primary structure comprises 370 residues: MSSPIIIRAPKKQPPEPPCLISLLPEEIVVDIVARVPRCYYPTLSQVSRRFRSLVASPEIYKRRSFFGCTEQCLYIAISKDQTSDIHWFTLCRKPNGQQFSGTTASDHRLVHIPTLPPMPMHGSYVGIGSNIFVMGGFCNWKITSSVSLIDCRTHTAQTLPNMPKAVAFPVTELIDRKIYVIGGSDTLSPMKSPSRIMMVYDTDTEMWQLRARPDWEAGKKWFSSVVIGGKIYMRTYHNSFVCDPNDTSCDRDEVLHSKEWWSACVIDDVLYYYDVRENCLRAYDPKQRAWGVVKGFEGLLPVACKWSKTVSYTGGKLVLFLQKTEKTEIWCAEIAVERREGGEIWGKVEWCNVVLSGNFHIMDCVAVVL.

Positions 18–64 (PCLISLLPEEIVVDIVARVPRCYYPTLSQVSRRFRSLVASPEIYKRR) constitute an F-box domain. 3 Kelch repeats span residues 131-177 (NIFV…LIDR), 178-230 (KIYV…VIGG), and 263-315 (SACV…SYTG).

Part of a SCF (ASK-cullin-F-box) protein ligase complex. Interacts with SKP1A/ASK1, SKP1B/ASK2, ASK11, ASK13 and ASK18.

The protein localises to the nucleus. It functions in the pathway protein modification; protein ubiquitination. Component of SCF(ASK-cullin-F-box) E3 ubiquitin ligase complexes, which may mediate the ubiquitination and subsequent proteasomal degradation of target proteins. The polypeptide is F-box/kelch-repeat protein At4g38940 (Arabidopsis thaliana (Mouse-ear cress)).